Consider the following 875-residue polypeptide: Alanine--tRNA ligase (875 aa).

Zn(2+) is bound by residues H564, H568, C666, and H670.

The protein belongs to the class-II aminoacyl-tRNA synthetase family. Homotetramer. Requires Zn(2+) as cofactor.

It localises to the cytoplasm. It catalyses the reaction tRNA(Ala) + L-alanine + ATP = L-alanyl-tRNA(Ala) + AMP + diphosphate. In terms of biological role, catalyzes the attachment of alanine to tRNA(Ala) in a two-step reaction: alanine is first activated by ATP to form Ala-AMP and then transferred to the acceptor end of tRNA(Ala). Also edits incorrectly charged Ser-tRNA(Ala) and Gly-tRNA(Ala) via its editing domain. This chain is Alanine--tRNA ligase, found in Yersinia pseudotuberculosis serotype IB (strain PB1/+).